The primary structure comprises 196 residues: Peptide deformylase (196 aa).

Fe cation contacts are provided by Cys103 and His145. Glu146 is an active-site residue. His149 serves as a coordination point for Fe cation.

It belongs to the polypeptide deformylase family. Requires Fe(2+) as cofactor.

It carries out the reaction N-terminal N-formyl-L-methionyl-[peptide] + H2O = N-terminal L-methionyl-[peptide] + formate. In terms of biological role, removes the formyl group from the N-terminal Met of newly synthesized proteins. Requires at least a dipeptide for an efficient rate of reaction. N-terminal L-methionine is a prerequisite for activity but the enzyme has broad specificity at other positions. The protein is Peptide deformylase of Rhodococcus opacus (strain B4).